The primary structure comprises 266 residues: Hydroxypyruvate/pyruvate aldolase (266 aa).

Catalysis depends on histidine 48, which acts as the Proton acceptor. 2 residues coordinate a divalent metal cation: glutamate 152 and aspartate 178.

It belongs to the HpcH/HpaI aldolase family. A divalent metal cation serves as cofactor.

The catalysed reaction is D-glyceraldehyde + pyruvate = 2-dehydro-3-deoxy-L-galactonate. The enzyme catalyses 2-dehydro-3-deoxy-D-gluconate = D-glyceraldehyde + pyruvate. Aldolase which can catalyze in vitro the aldolisation reaction between hydroxypyruvate (HPA) or pyruvate (PA) and D-glyceraldehyde (D-GA). The condensation of pyruvate and D-glyceraldehyde produces 2-dehydro-3-deoxy-L-galactonate as the major product and 2-dehydro-3-deoxy-D-gluconate. Has weak activity with hydroxypyruvate and D-glyceraldehyde. This Agrobacterium fabrum (strain C58 / ATCC 33970) (Agrobacterium tumefaciens (strain C58)) protein is Hydroxypyruvate/pyruvate aldolase.